The following is a 170-amino-acid chain: MDLKKYIYDIPDFPSPGIIFRDITPLLQNPETFRRTVELLAEKVVDLRPTHVVAIESRGFMFGAPLAYKLGLGFVPVRKEGKLPRESISVSYDLEYGNNTLEIHTDALKPGDRVVIVDDVLATGGTMKATVELCERLGAKVEALLFVIELLALEGRKKLTGKKVISLVQY.

The protein belongs to the purine/pyrimidine phosphoribosyltransferase family. As to quaternary structure, homodimer.

The protein resides in the cytoplasm. The catalysed reaction is AMP + diphosphate = 5-phospho-alpha-D-ribose 1-diphosphate + adenine. It functions in the pathway purine metabolism; AMP biosynthesis via salvage pathway; AMP from adenine: step 1/1. Catalyzes a salvage reaction resulting in the formation of AMP, that is energically less costly than de novo synthesis. The polypeptide is Adenine phosphoribosyltransferase (Carboxydothermus hydrogenoformans (strain ATCC BAA-161 / DSM 6008 / Z-2901)).